We begin with the raw amino-acid sequence, 474 residues long: tRNA-2-methylthio-N(6)-dimethylallyladenosine synthase (474 aa).

The region spanning 3–120 is the MTTase N-terminal domain; the sequence is KKLHIKTWGC…LPDMIEQVRR (118 aa). 6 residues coordinate [4Fe-4S] cluster: Cys-12, Cys-49, Cys-83, Cys-157, Cys-161, and Cys-164. One can recognise a Radical SAM core domain in the interval 143-375; that stretch reads RAEGPTAFVS…QDRITQQAMR (233 aa). The TRAM domain occupies 378–441; sequence RHMMGTVQRI…TNSLRGKFIR (64 aa).

Belongs to the methylthiotransferase family. MiaB subfamily. As to quaternary structure, monomer. [4Fe-4S] cluster is required as a cofactor.

The protein resides in the cytoplasm. The enzyme catalyses N(6)-dimethylallyladenosine(37) in tRNA + (sulfur carrier)-SH + AH2 + 2 S-adenosyl-L-methionine = 2-methylsulfanyl-N(6)-dimethylallyladenosine(37) in tRNA + (sulfur carrier)-H + 5'-deoxyadenosine + L-methionine + A + S-adenosyl-L-homocysteine + 2 H(+). Catalyzes the methylthiolation of N6-(dimethylallyl)adenosine (i(6)A), leading to the formation of 2-methylthio-N6-(dimethylallyl)adenosine (ms(2)i(6)A) at position 37 in tRNAs that read codons beginning with uridine. The sequence is that of tRNA-2-methylthio-N(6)-dimethylallyladenosine synthase from Shewanella sp. (strain W3-18-1).